A 143-amino-acid polypeptide reads, in one-letter code: Transcriptional regulator MraZ (143 aa).

SpoVT-AbrB domains follow at residues 5 to 47 and 76 to 119; these read EYQH…PKDE and AIES…SKDN.

The protein belongs to the MraZ family. In terms of assembly, forms oligomers.

It is found in the cytoplasm. The protein resides in the nucleoid. In Oenococcus oeni (strain ATCC BAA-331 / PSU-1), this protein is Transcriptional regulator MraZ.